Reading from the N-terminus, the 239-residue chain is Orotidine 5'-phosphate decarboxylase (239 aa).

Substrate contacts are provided by residues Asp11, Lys33, 60–69 (DLKCHDIPTT), Thr123, Arg185, Gln194, Gly214, and Arg215. Lys62 serves as the catalytic Proton donor.

The protein belongs to the OMP decarboxylase family. Type 1 subfamily. Homodimer.

It catalyses the reaction orotidine 5'-phosphate + H(+) = UMP + CO2. Its pathway is pyrimidine metabolism; UMP biosynthesis via de novo pathway; UMP from orotate: step 2/2. Its function is as follows. Catalyzes the decarboxylation of orotidine 5'-monophosphate (OMP) to uridine 5'-monophosphate (UMP). In Bacillus licheniformis (strain ATCC 14580 / DSM 13 / JCM 2505 / CCUG 7422 / NBRC 12200 / NCIMB 9375 / NCTC 10341 / NRRL NRS-1264 / Gibson 46), this protein is Orotidine 5'-phosphate decarboxylase.